The primary structure comprises 148 residues: 3-hydroxyacyl-[acyl-carrier-protein] dehydratase FabZ (148 aa).

Residue His55 is part of the active site.

The protein belongs to the thioester dehydratase family. FabZ subfamily.

The protein localises to the cytoplasm. The enzyme catalyses a (3R)-hydroxyacyl-[ACP] = a (2E)-enoyl-[ACP] + H2O. Functionally, involved in unsaturated fatty acids biosynthesis. Catalyzes the dehydration of short chain beta-hydroxyacyl-ACPs and long chain saturated and unsaturated beta-hydroxyacyl-ACPs. The sequence is that of 3-hydroxyacyl-[acyl-carrier-protein] dehydratase FabZ from Haemophilus influenzae (strain 86-028NP).